A 222-amino-acid polypeptide reads, in one-letter code: L-cystine transport system permease protein TcyL (222 aa).

Topologically, residues Met1 to Thr22 are periplasmic. An ABC transmembrane type-1 domain is found at Ala19–Gln207. Residues Leu23–Met43 traverse the membrane as a helical segment. Residues Arg44 to Gly64 lie on the Cytoplasmic side of the membrane. The helical transmembrane segment at Thr65–Leu85 threads the bilayer. The Periplasmic segment spans residues Asp86–Thr182. The helical transmembrane segment at Leu183–Leu203 threads the bilayer. Topologically, residues Ser204–Lys222 are cytoplasmic.

Belongs to the binding-protein-dependent transport system permease family. HisMQ subfamily. In terms of assembly, the complex is composed of two ATP-binding proteins (TcyN), two transmembrane proteins (TcyL) and a solute-binding protein (TcyJ).

The protein localises to the cell inner membrane. Functionally, part of the ABC transporter complex TcyJLN involved in L-cystine import. Responsible for the translocation of the substrate across the membrane. This chain is L-cystine transport system permease protein TcyL, found in Escherichia coli O6:H1 (strain CFT073 / ATCC 700928 / UPEC).